The sequence spans 106 residues: Nucleoid-associated protein MCCL_1934 (106 aa).

The disordered stretch occupies residues 1–34 (MRGGGNMQQMMKQMQKMQKKMAEEQEKLKEERIE). Low complexity predominate over residues 7–16 (MQQMMKQMQK). Residues 20–34 (KMAEEQEKLKEERIE) show a composition bias toward basic and acidic residues.

The protein belongs to the YbaB/EbfC family. In terms of assembly, homodimer.

The protein resides in the cytoplasm. It localises to the nucleoid. Binds to DNA and alters its conformation. May be involved in regulation of gene expression, nucleoid organization and DNA protection. The polypeptide is Nucleoid-associated protein MCCL_1934 (Macrococcus caseolyticus (strain JCSC5402) (Macrococcoides caseolyticum)).